A 156-amino-acid chain; its full sequence is Small ribosomal subunit protein uS7 (156 aa).

Belongs to the universal ribosomal protein uS7 family. As to quaternary structure, part of the 30S ribosomal subunit. Contacts proteins S9 and S11.

In terms of biological role, one of the primary rRNA binding proteins, it binds directly to 16S rRNA where it nucleates assembly of the head domain of the 30S subunit. Is located at the subunit interface close to the decoding center, probably blocks exit of the E-site tRNA. In Phytoplasma australiense, this protein is Small ribosomal subunit protein uS7.